The primary structure comprises 263 residues: Cytochrome c oxidase subunit 3 (263 aa).

The next 7 helical transmembrane spans lie at P9 to L29, F40 to W60, G84 to F104, I129 to A149, A161 to Y181, T198 to L218, and A241 to W261.

Belongs to the cytochrome c oxidase subunit 3 family. In terms of assembly, component of the cytochrome c oxidase (complex IV, CIV), a multisubunit enzyme composed of a catalytic core of 3 subunits and several supernumerary subunits. The complex exists as a monomer or a dimer and forms supercomplexes (SCs) in the inner mitochondrial membrane with ubiquinol-cytochrome c oxidoreductase (cytochrome b-c1 complex, complex III, CIII).

The protein localises to the mitochondrion inner membrane. The catalysed reaction is 4 Fe(II)-[cytochrome c] + O2 + 8 H(+)(in) = 4 Fe(III)-[cytochrome c] + 2 H2O + 4 H(+)(out). Component of the cytochrome c oxidase, the last enzyme in the mitochondrial electron transport chain which drives oxidative phosphorylation. The respiratory chain contains 3 multisubunit complexes succinate dehydrogenase (complex II, CII), ubiquinol-cytochrome c oxidoreductase (cytochrome b-c1 complex, complex III, CIII) and cytochrome c oxidase (complex IV, CIV), that cooperate to transfer electrons derived from NADH and succinate to molecular oxygen, creating an electrochemical gradient over the inner membrane that drives transmembrane transport and the ATP synthase. Cytochrome c oxidase is the component of the respiratory chain that catalyzes the reduction of oxygen to water. Electrons originating from reduced cytochrome c in the intermembrane space (IMS) are transferred via the dinuclear copper A center (CU(A)) of subunit 2 and heme A of subunit 1 to the active site in subunit 1, a binuclear center (BNC) formed by heme A3 and copper B (CU(B)). The BNC reduces molecular oxygen to 2 water molecules using 4 electrons from cytochrome c in the IMS and 4 protons from the mitochondrial matrix. The chain is Cytochrome c oxidase subunit 3 (COIII) from Locusta migratoria (Migratory locust).